Here is a 96-residue protein sequence, read N- to C-terminus: Aspartyl/glutamyl-tRNA(Asn/Gln) amidotransferase subunit C (96 aa).

Belongs to the GatC family. In terms of assembly, heterotrimer of A, B and C subunits.

The enzyme catalyses L-glutamyl-tRNA(Gln) + L-glutamine + ATP + H2O = L-glutaminyl-tRNA(Gln) + L-glutamate + ADP + phosphate + H(+). It catalyses the reaction L-aspartyl-tRNA(Asn) + L-glutamine + ATP + H2O = L-asparaginyl-tRNA(Asn) + L-glutamate + ADP + phosphate + 2 H(+). Its function is as follows. Allows the formation of correctly charged Asn-tRNA(Asn) or Gln-tRNA(Gln) through the transamidation of misacylated Asp-tRNA(Asn) or Glu-tRNA(Gln) in organisms which lack either or both of asparaginyl-tRNA or glutaminyl-tRNA synthetases. The reaction takes place in the presence of glutamine and ATP through an activated phospho-Asp-tRNA(Asn) or phospho-Glu-tRNA(Gln). The chain is Aspartyl/glutamyl-tRNA(Asn/Gln) amidotransferase subunit C from Sulfurovum sp. (strain NBC37-1).